The sequence spans 93 residues: Small ribosomal subunit protein uS19 (93 aa).

Belongs to the universal ribosomal protein uS19 family.

Functionally, protein S19 forms a complex with S13 that binds strongly to the 16S ribosomal RNA. This chain is Small ribosomal subunit protein uS19, found in Nautilia profundicola (strain ATCC BAA-1463 / DSM 18972 / AmH).